The following is a 181-amino-acid chain: Segregation and condensation protein B (181 aa).

This sequence belongs to the ScpB family. As to quaternary structure, homodimer. Homodimerization may be required to stabilize the binding of ScpA to the Smc head domains. Component of a cohesin-like complex composed of ScpA, ScpB and the Smc homodimer, in which ScpA and ScpB bind to the head domain of Smc. The presence of the three proteins is required for the association of the complex with DNA.

The protein localises to the cytoplasm. Functionally, participates in chromosomal partition during cell division. May act via the formation of a condensin-like complex containing Smc and ScpA that pull DNA away from mid-cell into both cell halves. The polypeptide is Segregation and condensation protein B (Desulforamulus reducens (strain ATCC BAA-1160 / DSM 100696 / MI-1) (Desulfotomaculum reducens)).